We begin with the raw amino-acid sequence, 307 residues long: 17-beta-hydroxysteroid dehydrogenase type 3 (307 aa).

Residues 6-26 form a helical membrane-spanning segment; it reads IIFVLTGTCAILVFGGKIASL. 47–76 lines the NADP(+) pocket; sequence GKWAVITGGSDGIGRAYAEELSKQGMSVII. Residue Ser-187 coordinates substrate. Tyr-200 acts as the Proton acceptor in catalysis.

This sequence belongs to the short-chain dehydrogenases/reductases (SDR) family. In terms of tissue distribution, expression shows strong sexual dimorphism. In female, highly expressed in ovaries, and at lower levels in skin muscle, eyes and liver. In males, strongly expressed in liver and at lower levels in testis, spleen, kidney, intestine and muscle.

It is found in the endoplasmic reticulum. The protein resides in the membrane. The catalysed reaction is a 17beta-hydroxy steroid + NADP(+) = a 17-oxo steroid + NADPH + H(+). It catalyses the reaction testosterone + NADP(+) = androst-4-ene-3,17-dione + NADPH + H(+). The enzyme catalyses 3beta-hydroxyandrost-5-en-17-one + NADPH + H(+) = androst-5-en-3beta,17beta-diol + NADP(+). It carries out the reaction 3beta-hydroxy-5alpha-androstan-17-one + NADPH + H(+) = 5alpha-androstane-3beta,17beta-diol + NADP(+). The catalysed reaction is androst-4-ene-3,11,17-trione + NADPH + H(+) = 17beta-hydroxyandrost-4-ene-3,11-dione + NADP(+). It catalyses the reaction 11beta-hydroxyandrost-4-ene-3,17-dione + NADPH + H(+) = 11beta,17beta-dihydroxyandrost-4-ene-3-one + NADP(+). Its pathway is hormone biosynthesis; testosterone biosynthesis. It functions in the pathway steroid metabolism. Its function is as follows. Catalyzes the conversion of 17-oxosteroids to 17beta-hydroxysteroids in the presence of NADPH. Favors the reduction of androstenedione to testosterone. Testosterone is the key androgen driving male development and function. Among further tested androgens epiandrosterone and dehydroepiandrosterone are accepted as substrates and reduced at C-17. Can also reduce 11-ketoandrostenedione as well as 11beta-hydroxyandrostenedione at C-17 to the respective testosterone forms. Cannot use androsterone and androstanedione as substrates. The chain is 17-beta-hydroxysteroid dehydrogenase type 3 (hsd17b3) from Danio rerio (Zebrafish).